The following is an 853-amino-acid chain: E3 ubiquitin-protein ligase RNF216 (853 aa).

3 disordered regions span residues 33–102 (TISD…DDIV), 125–152 (PLEV…ASVD), and 165–228 (PYFQ…AHPL). The segment covering 53–73 (QQEDDLDDDVILTEDDSEDEY) has biased composition (acidic residues). Residue Lys89 forms a Glycyl lysine isopeptide (Lys-Gly) (interchain with G-Cter in SUMO2) linkage. Residues Lys339 and Lys342 each participate in a glycyl lysine isopeptide (Lys-Gly) (interchain with G-Cter in SUMO2) cross-link. Phosphoserine is present on Ser407. Glycyl lysine isopeptide (Lys-Gly) (interchain with G-Cter in SUMO2) cross-links involve residues Lys413, Lys418, Lys436, Lys447, and Lys473. A coiled-coil region spans residues 463–479 (VKQEQEFYEQKIKEMAE). The tract at residues 499 to 716 (QLIECRCCYG…SPGAPCQECS (218 aa)) is TRIAD supradomain. Zn(2+) contacts are provided by Cys503, Cys506, Cys525, Cys528, Cys593, and Cys596. The RING-type 1 zinc finger occupies 503–552 (CRCCYGEFPFEELTQCADAHLFCKECLIRYAQEAVFGSGKSELSCMEGSC). The IBR-type zinc-finger motif lies at 571 to 636 (YKYYERKAEE…LWKEHNGLTC (66 aa)). Lys607 participates in a covalent cross-link: Glycyl lysine isopeptide (Lys-Gly) (interchain with G-Cter in SUMO2). Cys611, Cys616, Cys621, Cys624, His631, and Cys636 together coordinate Zn(2+). Residues Lys646 and Lys654 each participate in a glycyl lysine isopeptide (Lys-Gly) (interchain with G-Cter in SUMO2) cross-link. Cys663 and Cys666 together coordinate Zn(2+). The RING-type 2; atypical zinc-finger motif lies at 663–691 (CHKCGTGLIKSEGCNRMSCRCGAQMCYLC). Residue Cys676 is part of the active site. Positions 681, 683, 688, 691, 704, and 712 each coordinate Zn(2+). Residues 725 to 751 (TEDDEKLIEEIQKEAEEEQKRKNGENT) adopt a coiled-coil conformation. Glycyl lysine isopeptide (Lys-Gly) (interchain with G-Cter in SUMO2) cross-links involve residues Lys753 and Lys761.

Interacts with UBE2L3 and to some extent with UBE2L6. Interacts with TRAF3, TLR3, TLR4, TLR5 and TLR9. Isoform 3/ZIN binds RIPK1. Post-translationally, auto-ubiquitinated. In terms of processing, phosphorylation at Ser-719 enhances acceptor ubiquitin binding and chain-type specificity towards 'Lys-63' di-ubiquitin but not di-ubiquitin with other linkage types.

It localises to the cytoplasm. The protein localises to the cytoplasmic vesicle. The protein resides in the clathrin-coated vesicle. The catalysed reaction is S-ubiquitinyl-[E2 ubiquitin-conjugating enzyme]-L-cysteine + [acceptor protein]-L-lysine = [E2 ubiquitin-conjugating enzyme]-L-cysteine + N(6)-ubiquitinyl-[acceptor protein]-L-lysine.. Its pathway is protein modification; protein ubiquitination. Allosterically activated by 'Lys-63'-linked di-ubiquitin. In terms of biological role, E3 ubiquitin ligase which accepts ubiquitin from specific E2 ubiquitin-conjugating enzymes, and then transfers it to substrates promoting their ubiquitination. Plays a role in the regulation of antiviral responses by promoting the degradation of TRAF3, TLR4 and TLR9. In turn, down-regulates NF-kappa-B and IRF3 activation as well as beta interferon production. Also participates in the regulation of autophagy by ubiquitinating BECN1 leading to its degradation and autophagy inhibition. Plays a role in ARC-dependent synaptic plasticity by mediating ARC ubiquitination resulting in its rapid proteasomal degradation. Plays aso an essential role in spermatogenesis and male fertility. Mechanistically, regulates meiosis by promoting the degradation of PRKACB through the ubiquitin-mediated lysosome pathway. Modulates the gonadotropin-releasing hormone signal pathway by affecting the stability of STAU2 that is required for the microtubule-dependent transport of neuronal RNA from the cell body to the dendrite. In Mus musculus (Mouse), this protein is E3 ubiquitin-protein ligase RNF216 (Rnf216).